The following is a 337-amino-acid chain: GTPase Obg (337 aa).

An Obg domain is found at 4–162 (SNFVDYAKIH…RQIVFQLKLL (159 aa)). The OBG-type G domain occupies 163-329 (ADVGLVGFPN…LKDLLWEKLR (167 aa)). GTP-binding positions include 169–176 (GFPNTGKS), 194–198 (FTTLE), 216–219 (DIPG), 283–286 (SKSD), and 310–312 (SSF). Residues Ser176 and Thr196 each contribute to the Mg(2+) site.

It belongs to the TRAFAC class OBG-HflX-like GTPase superfamily. OBG GTPase family. Monomer. Mg(2+) serves as cofactor.

The protein resides in the cytoplasm. An essential GTPase which binds GTP, GDP and possibly (p)ppGpp with moderate affinity, with high nucleotide exchange rates and a fairly low GTP hydrolysis rate. Plays a role in control of the cell cycle, stress response, ribosome biogenesis and in those bacteria that undergo differentiation, in morphogenesis control. The polypeptide is GTPase Obg (Azobacteroides pseudotrichonymphae genomovar. CFP2).